Reading from the N-terminus, the 239-residue chain is Fatty acid metabolism regulator protein (239 aa).

The 69-residue stretch at 6–74 folds into the HTH gntR-type domain; the sequence is QSPAGFAEEY…HGKPTQVNNF (69 aa). Positions 34 to 53 form a DNA-binding region, H-T-H motif; the sequence is ERELSELIGVTRTTLREVLQ.

Homodimer.

Its subcellular location is the cytoplasm. In terms of biological role, multifunctional regulator of fatty acid metabolism. The chain is Fatty acid metabolism regulator protein from Edwardsiella ictaluri (strain 93-146).